Consider the following 428-residue polypeptide: Putative zinc metalloprotease SACOL1281 (428 aa).

His21 lines the Zn(2+) pocket. The active site involves Glu22. His25 lines the Zn(2+) pocket. The next 4 helical transmembrane spans lie at 172–194 (FLTL…IGLA), 309–331 (GSTY…GFSF), 352–374 (IISL…LIPI), and 401–420 (TTII…LVTW). In terms of domain architecture, PDZ spans 186 to 269 (ALVLFIGLAY…TKSVELTPKK (84 aa)).

This sequence belongs to the peptidase M50B family. It depends on Zn(2+) as a cofactor.

It is found in the cell membrane. In Staphylococcus aureus (strain COL), this protein is Putative zinc metalloprotease SACOL1281.